The following is a 224-amino-acid chain: Phosphoribosylformylglycinamidine synthase subunit PurQ (224 aa).

One can recognise a Glutamine amidotransferase type-1 domain in the interval 2 to 224 (KIAVIVFPGS…SLLEEGKVKG (223 aa)). The Nucleophile role is filled by Cys86. Active-site residues include His195 and Glu197.

Part of the FGAM synthase complex composed of 1 PurL, 1 PurQ and 2 PurS subunits.

It localises to the cytoplasm. It catalyses the reaction N(2)-formyl-N(1)-(5-phospho-beta-D-ribosyl)glycinamide + L-glutamine + ATP + H2O = 2-formamido-N(1)-(5-O-phospho-beta-D-ribosyl)acetamidine + L-glutamate + ADP + phosphate + H(+). The enzyme catalyses L-glutamine + H2O = L-glutamate + NH4(+). Its pathway is purine metabolism; IMP biosynthesis via de novo pathway; 5-amino-1-(5-phospho-D-ribosyl)imidazole from N(2)-formyl-N(1)-(5-phospho-D-ribosyl)glycinamide: step 1/2. In terms of biological role, part of the phosphoribosylformylglycinamidine synthase complex involved in the purines biosynthetic pathway. Catalyzes the ATP-dependent conversion of formylglycinamide ribonucleotide (FGAR) and glutamine to yield formylglycinamidine ribonucleotide (FGAM) and glutamate. The FGAM synthase complex is composed of three subunits. PurQ produces an ammonia molecule by converting glutamine to glutamate. PurL transfers the ammonia molecule to FGAR to form FGAM in an ATP-dependent manner. PurS interacts with PurQ and PurL and is thought to assist in the transfer of the ammonia molecule from PurQ to PurL. The polypeptide is Phosphoribosylformylglycinamidine synthase subunit PurQ (Ligilactobacillus salivarius (strain UCC118) (Lactobacillus salivarius)).